The sequence spans 149 residues: Deoxyuridine 5'-triphosphate nucleotidohydrolase (149 aa).

Substrate-binding positions include 68–70 (RSG), asparagine 81, 85–87 (LID), and methionine 95.

Belongs to the dUTPase family. Mg(2+) is required as a cofactor.

It catalyses the reaction dUTP + H2O = dUMP + diphosphate + H(+). It participates in pyrimidine metabolism; dUMP biosynthesis; dUMP from dCTP (dUTP route): step 2/2. In terms of biological role, this enzyme is involved in nucleotide metabolism: it produces dUMP, the immediate precursor of thymidine nucleotides and it decreases the intracellular concentration of dUTP so that uracil cannot be incorporated into DNA. This Bordetella avium (strain 197N) protein is Deoxyuridine 5'-triphosphate nucleotidohydrolase.